The chain runs to 338 residues: MKVFYDKDCDLSLVKGKTVAIIGYGSQGHAHALNLHDSGVKVVVGLRKGGASWNKAANAGLEVKEVAEAVKVADVVMMLLPDENIAAVYRNEVHANIKAGAALAFAHGFNVHYGQVVPRDDIDVIMIAPKAPGHTVRSTYTQGGGVPHLVAVHQDKSGSARDVALSYASANGGGRAGIIETDFREETETDLFGEQAVLCGGTVELIKAGFDTLVEAGYAPEMAYFECLHELKLIVDLIYEGGIANMNYSISNNAEFGEYETGPKIVTEQTRQAMRDALVAIQTGEYAKKFILENAAGAPTLTSRRRINAESQIEQVGGKLRAMMPWIAANKLVDKSKN.

Residues 1–181 (MKVFYDKDCD…GGGRAGIIET (181 aa)) enclose the KARI N-terminal Rossmann domain. NADP(+)-binding positions include 24–27 (YGSQ), Arg-47, and Ser-52. His-107 is an active-site residue. An NADP(+)-binding site is contributed by Gly-133. Positions 182 to 327 (DFREETETDL…GKLRAMMPWI (146 aa)) constitute a KARI C-terminal knotted domain. Positions 190, 194, 226, and 230 each coordinate Mg(2+). Position 251 (Ser-251) interacts with substrate.

Belongs to the ketol-acid reductoisomerase family. It depends on Mg(2+) as a cofactor.

The enzyme catalyses (2R)-2,3-dihydroxy-3-methylbutanoate + NADP(+) = (2S)-2-acetolactate + NADPH + H(+). It carries out the reaction (2R,3R)-2,3-dihydroxy-3-methylpentanoate + NADP(+) = (S)-2-ethyl-2-hydroxy-3-oxobutanoate + NADPH + H(+). It participates in amino-acid biosynthesis; L-isoleucine biosynthesis; L-isoleucine from 2-oxobutanoate: step 2/4. Its pathway is amino-acid biosynthesis; L-valine biosynthesis; L-valine from pyruvate: step 2/4. Functionally, involved in the biosynthesis of branched-chain amino acids (BCAA). Catalyzes an alkyl-migration followed by a ketol-acid reduction of (S)-2-acetolactate (S2AL) to yield (R)-2,3-dihydroxy-isovalerate. In the isomerase reaction, S2AL is rearranged via a Mg-dependent methyl migration to produce 3-hydroxy-3-methyl-2-ketobutyrate (HMKB). In the reductase reaction, this 2-ketoacid undergoes a metal-dependent reduction by NADPH to yield (R)-2,3-dihydroxy-isovalerate. The protein is Ketol-acid reductoisomerase (NADP(+)) of Bordetella petrii (strain ATCC BAA-461 / DSM 12804 / CCUG 43448).